The primary structure comprises 1448 residues: MGARNSVLSGKKADELEKIRLRPGGKKKYMLKHVVWAANELDRFGLAESLLENKEGCQKILSVLAPLVPTGSENLKSLYNTVCVIWCIHAEEKVKHTEEAKQIVQRHLVMETGTAETMPKTSRPTAPFSGRGGNYPVQQIGGNYTHLPLSPRTLNAWVKLIEEKKFGAEVVSGFQALSEGCLPYDINQMLNCVGDHQAAMQIIRDIINEEAADWDLQHPQQAPQQGQLREPSGSDIAGTTSTVEEQIQWMYRQQNPIPVGNIYRRWIQLGLQKCVRMYNPTNILDVKQGPKEPFQSYVDRFYKSLRAEQTDPAVKNWMTQTLLIQNANPDCKLVLKGLGTNPTLEEMLTACQGVGGPGQKARLMAEALKEALAPAPIPFAAAQQKGPRKPIKCWNCGKEGHSARQCRAPRRQGCWKCGKMDHVMAKCPNRQAGFFRPWPLGKEAPQFPHGSSASGADANCSPRRTSCGSAKELHALGQAAERKQREALQGGDRGFAAPQFSLWRRPVVTAHIEGQPVEVLLDTGADDSIVTGIELGPHYTPKIVGGIGGFINTKEYKNVEIEVLGKRIKGTIMTGDTPINIFGRNLLTALGMSLNLPIAKVEPVKSPLKPGKDGPKLKQWPLSKEKIVALREICEKMEKDGQLEEAPPTNPYNTPTFAIKKKDKNKWRMLIDFRELNRVTQDFTEVQLGIPHPAGLAKRKRITVLDIGDAYFSIPLDEEFRQYTAFTLPSVNNAEPGKRYIYKVLPQGWKGSPAIFQYTMRHVLEPFRKANPDVTLVQYMDDILIASDRTDLEHDRVVLQLKELLNSIGFSSPEEKFQKDPPFQWMGYELWPTKWKLQKIELPQRETWTVNDIQKLVGVLNWAAQIYPGIKTKHLCRLIRGKMTLTEEVQWTEMAEAEYEENKIILSQEQEGCYYQESKPLEATVIKSQDNQWSYKIHQEDKILKVGKFAKIKNTHTNGVRLLAHVIQKIGKEAIVIWGQVPKFHLPVEKDVWEQWWTDYWQVTWIPEWDFISTPPLVRLVFNLVKDPIEGEETYYVDGSCSKQSKEGKAGYITDRGKDKVKVLEQTTNQQAELEAFLMALTDSGPKANIIVDSQYVMGIITGCPTESESRLVNQIIEEMIKKTEIYVAWVPAHKGIGGNQEIDHLVSQGIRQVLFLEKIEPAQEEHSKYHSNIKELVFKFGLPRLVAKQIVDTCDKCHQKGEAIHGQVNSDLGTWQMDCTHLEGKIVIVAVHVASGFIEAEVIPQETGRQTALFLLKLASRWPITHLHTDNGANFASQEVKMVAWWAGIEHTFGVPYNPQSQGVVEAMNHHLKNQIDRIREQANSVETIVLMAVHCMNFKRRGGIGDMTPAERLINMITTEQEIQFQQSKNSKFKNFRVYYREGRDQLWKGPGELLWKGEGAVILKVGTDIKVVPRRKAKIIKDYGGGKEMDSSSHMEDTGEAREVA.

Glycine 2 carries the N-myristoyl glycine; by host lipid modification. Residues 16 to 22 carry the Nuclear export signal motif; sequence LEKIRLR. The short motif at 26-32 is the Nuclear localization signal element; that stretch reads KKKYMLK. Low complexity predominate over residues 218 to 227; sequence HPQQAPQQGQ. Residues 218-237 form a disordered region; sequence HPQQAPQQGQLREPSGSDIA. CCHC-type zinc fingers lie at residues 391-408 and 412-429; these read IKCW…QCRA and QGCW…KCPN. A disordered region spans residues 440–461; it reads LGKEAPQFPHGSSASGADANCS. In terms of domain architecture, Peptidase A2 spans 517-586; that stretch reads VEVLLDTGAD…TPINIFGRNL (70 aa). The For protease activity; shared with dimeric partner role is filled by aspartate 522. The region spanning 640–830 is the Reverse transcriptase domain; that stretch reads DGQLEEAPPT…PPFQWMGYEL (191 aa). Aspartate 706, aspartate 781, and aspartate 782 together coordinate Mg(2+). The segment at 823 to 831 is RT 'primer grip'; sequence FQWMGYELW. The Tryptophan repeat motif motif lies at 993 to 1009; it reads WEQWWTDYWQVTWIPEW. An RNase H type-1 domain is found at 1029–1152; sequence IEGEETYYVD…IDHLVSQGIR (124 aa). Positions 1038, 1073, 1093, and 1144 each coordinate Mg(2+). The Integrase-type zinc finger occupies 1158 to 1199; sequence EKIEPAQEEHSKYHSNIKELVFKFGLPRLVAKQIVDTCDKCH. Zn(2+) is bound by residues histidine 1167, histidine 1171, cysteine 1195, and cysteine 1198. The Integrase catalytic domain occupies 1209-1359; sequence VNSDLGTWQM…TPAERLINMI (151 aa). Mg(2+) contacts are provided by aspartate 1219 and aspartate 1271. The segment at residues 1378–1425 is a DNA-binding region (integrase-type); the sequence is FRVYYREGRDQLWKGPGELLWKGEGAVILKVGTDIKVVPRRKAKIIKD. The tract at residues 1426–1448 is disordered; sequence YGGGKEMDSSSHMEDTGEAREVA.

As to quaternary structure, homotrimer. Interacts with gp41 (via C-terminus). In terms of assembly, homodimer. The active site consists of two apposed aspartic acid residues. Heterodimer of p66 RT and p51 RT (RT p66/p51). Heterodimerization of RT is essential for DNA polymerase activity. Despite the sequence identities, p66 RT and p51 RT have distinct folding. As to quaternary structure, homotetramer; may further associate as a homohexadecamer. Mg(2+) serves as cofactor. Post-translationally, specific enzymatic cleavages by the viral protease yield mature proteins. The protease is released by autocatalytic cleavage. The polyprotein is cleaved during and after budding, this process is termed maturation. Proteolytic cleavage of p66 RT removes the RNase H domain to yield the p51 RT subunit. In terms of processing, capsid protein p24 is phosphorylated.

Its subcellular location is the virion. It is found in the host nucleus. The protein localises to the host cytoplasm. It localises to the host cell membrane. It carries out the reaction Specific for a P1 residue that is hydrophobic, and P1' variable, but often Pro.. The enzyme catalyses Endohydrolysis of RNA in RNA/DNA hybrids. Three different cleavage modes: 1. sequence-specific internal cleavage of RNA. Human immunodeficiency virus type 1 and Moloney murine leukemia virus enzymes prefer to cleave the RNA strand one nucleotide away from the RNA-DNA junction. 2. RNA 5'-end directed cleavage 13-19 nucleotides from the RNA end. 3. DNA 3'-end directed cleavage 15-20 nucleotides away from the primer terminus.. The catalysed reaction is 3'-end directed exonucleolytic cleavage of viral RNA-DNA hybrid.. It catalyses the reaction DNA(n) + a 2'-deoxyribonucleoside 5'-triphosphate = DNA(n+1) + diphosphate. The viral protease is inhibited by many synthetic protease inhibitors (PIs), such as amprenavir, atazanavir, indinavir, loprinavir, nelfinavir, ritonavir and saquinavir. RT can be inhibited either by nucleoside RT inhibitors (NRTIs) or by non nucleoside RT inhibitors (NNRTIs). NRTIs act as chain terminators, whereas NNRTIs inhibit DNA polymerization by binding a small hydrophobic pocket near the RT active site and inducing an allosteric change in this region. Classical NRTIs are abacavir, adefovir (PMEA), didanosine (ddI), lamivudine (3TC), stavudine (d4T), tenofovir (PMPA), zalcitabine (ddC), and zidovudine (AZT). Classical NNRTIs are atevirdine (BHAP U-87201E), delavirdine, efavirenz (DMP-266), emivirine (I-EBU), and nevirapine (BI-RG-587). The tritherapies used as a basic effective treatment of AIDS associate two NRTIs and one NNRTI. Use of protease inhibitors in tritherapy regimens permit more ambitious therapeutic strategies. Functionally, gag-Pol polyprotein and Gag polyprotein may regulate their own translation, by the binding genomic RNA in the 5'-UTR. At low concentration, Gag-Pol and Gag would promote translation, whereas at high concentration, the polyproteins encapsidate genomic RNA and then shut off translation. Matrix protein p17 has two main functions: in infected cell, it targets Gag and Gag-pol polyproteins to the plasma membrane via a multipartite membrane-binding signal, that includes its myristointegration complex. The myristoylation signal and the NLS exert conflicting influences its subcellular localization. The key regulation of these motifs might be phosphorylation of a portion of MA molecules on the C-terminal tyrosine at the time of virus maturation, by virion-associated cellular tyrosine kinase. Implicated in the release from host cell mediated by Vpu. Its function is as follows. Capsid protein p24 forms the conical core that encapsulates the genomic RNA-nucleocapsid complex in the virion. The core is constituted by capsid protein hexamer subunits. The core is disassembled soon after virion entry. Interaction with host PPIA/CYPA protects the virus from restriction by host TRIM5-alpha and from an unknown antiviral activity in host cells. This capsid restriction by TRIM5 is one of the factors which restricts SIV to the simian species. In terms of biological role, nucleocapsid protein p7 encapsulates and protects viral dimeric unspliced (genomic) RNA. Binds these RNAs through its zinc fingers. Facilitates rearangement of nucleic acid secondary structure during retrotranscription of genomic RNA. This capability is referred to as nucleic acid chaperone activity. Functionally, the aspartyl protease mediates proteolytic cleavages of Gag and Gag-Pol polyproteins during or shortly after the release of the virion from the plasma membrane. Cleavages take place as an ordered, step-wise cascade to yield mature proteins. This process is called maturation. Displays maximal activity during the budding process just prior to particle release from the cell. Also cleaves Nef and Vif, probably concomitantly with viral structural proteins on maturation of virus particles. Hydrolyzes host EIF4GI and PABP1 in order to shut off the capped cellular mRNA translation. The resulting inhibition of cellular protein synthesis serves to ensure maximal viral gene expression and to evade host immune response. Reverse transcriptase/ribonuclease H (RT) is a multifunctional enzyme that converts the viral dimeric RNA genome into dsDNA in the cytoplasm, shortly after virus entry into the cell. This enzyme displays a DNA polymerase activity that can copy either DNA or RNA templates, and a ribonuclease H (RNase H) activity that cleaves the RNA strand of RNA-DNA heteroduplexes in a partially processive 3' to 5' endonucleasic mode. Conversion of viral genomic RNA into dsDNA requires many steps. A tRNA binds to the primer-binding site (PBS) situated at the 5'-end of the viral RNA. RT uses the 3' end of the tRNA primer to perform a short round of RNA-dependent minus-strand DNA synthesis. The reading proceeds through the U5 region and ends after the repeated (R) region which is present at both ends of viral RNA. The portion of the RNA-DNA heteroduplex is digested by the RNase H, resulting in a ssDNA product attached to the tRNA primer. This ssDNA/tRNA hybridizes with the identical R region situated at the 3' end of viral RNA. This template exchange, known as minus-strand DNA strong stop transfer, can be either intra- or intermolecular. RT uses the 3' end of this newly synthesized short ssDNA to perform the RNA-dependent minus-strand DNA synthesis of the whole template. RNase H digests the RNA template except for two polypurine tracts (PPTs) situated at the 5'-end and near the center of the genome. It is not clear if both polymerase and RNase H activities are simultaneous. RNase H can probably proceed both in a polymerase-dependent (RNA cut into small fragments by the same RT performing DNA synthesis) and a polymerase-independent mode (cleavage of remaining RNA fragments by free RTs). Secondly, RT performs DNA-directed plus-strand DNA synthesis using the PPTs that have not been removed by RNase H as primers. PPTs and tRNA primers are then removed by RNase H. The 3' and 5' ssDNA PBS regions hybridize to form a circular dsDNA intermediate. Strand displacement synthesis by RT to the PBS and PPT ends produces a blunt ended, linear dsDNA copy of the viral genome that includes long terminal repeats (LTRs) at both ends. Its function is as follows. Integrase catalyzes viral DNA integration into the host chromosome, by performing a series of DNA cutting and joining reactions. This enzyme activity takes place after virion entry into a cell and reverse transcription of the RNA genome in dsDNA. The first step in the integration process is 3' processing. This step requires a complex comprising the viral genome, matrix protein, Vpr and integrase. This complex is called the pre-integration complex (PIC). The integrase protein removes 2 nucleotides from each 3' end of the viral DNA, leaving recessed CA OH's at the 3' ends. In the second step, the PIC enters cell nucleus. This process is mediated through integrase and Vpr proteins, and allows the virus to infect a non dividing cell. This ability to enter the nucleus is specific of lentiviruses, other retroviruses cannot and rely on cell division to access cell chromosomes. In the third step, termed strand transfer, the integrase protein joins the previously processed 3' ends to the 5' ends of strands of target cellular DNA at the site of integration. The 5'-ends are produced by integrase-catalyzed staggered cuts, 5 bp apart. A Y-shaped, gapped, recombination intermediate results, with the 5'-ends of the viral DNA strands and the 3' ends of target DNA strands remaining unjoined, flanking a gap of 5 bp. The last step is viral DNA integration into host chromosome. This involves host DNA repair synthesis in which the 5 bp gaps between the unjoined strands are filled in and then ligated. Since this process occurs at both cuts flanking the SIV genome, a 5 bp duplication of host DNA is produced at the ends of SIV integration. Alternatively, Integrase may catalyze the excision of viral DNA just after strand transfer, this is termed disintegration. The sequence is that of Gag-Pol polyprotein (gag-pol) from Cercopithecidae (Old World monkeys).